A 74-amino-acid chain; its full sequence is Brevinin-2Tb (74 aa).

The signal sequence occupies residues 1-22 (MFTMKKSLLLFFFLGTISLSLC). Positions 23 to 40 (QEERNADEDDGEMTEEEK) are excised as a propeptide. A disulfide bond links cysteine 68 and cysteine 74.

It belongs to the frog skin active peptide (FSAP) family. Brevinin subfamily. Expressed by the skin glands.

It localises to the secreted. Antimicrobial peptide. This chain is Brevinin-2Tb, found in Rana temporaria (European common frog).